Consider the following 637-residue polypeptide: Zinc finger protein rsv2 (637 aa).

6 disordered regions span residues 1 to 41 (MDTT…SKMN), 145 to 164 (SNHQ…PTSA), 169 to 207 (IITA…QPFS), 221 to 363 (TGAI…STAL), 404 to 427 (QDSF…TRSY), and 440 to 558 (SVNP…GAQR). Positions 172-189 (ANSSPSGNAGSNASASMS) are enriched in low complexity. Positions 196–207 (PSASTINDQPFS) are enriched in polar residues. Positions 279–296 (SDLKRSLGHNQKSDRVSK) are enriched in basic and acidic residues. Residues 298–344 (VSPQHQANPSTLNNPLKTQNFDSSKNLYTDNKDSSLVSPTGLQSRME) show a composition bias toward polar residues. 2 stretches are compositionally biased toward basic and acidic residues: residues 345–355 (QNPEVRAHPMK) and 404–413 (QDSFNKESIK). A compositionally biased stretch (low complexity) spans 455–471 (VPSNTTISSSPPLTSPV). 2 stretches are compositionally biased toward polar residues: residues 472–498 (KTSA…QSAA) and 508–527 (YYNT…QKVS). Over residues 544–554 (TTPTNSSTTAT) the composition is skewed to low complexity. The C2H2-type 1 zinc-finger motif lies at 572 to 603 (VRCTLQNRVTGEICNTVFSRTYDLIRHQDTIH). Residues 610–635 (FRCEICGDQRHFSRHDALVRHLRVKH) form a C2H2-type 2; degenerate zinc finger.

Its subcellular location is the nucleus. The polypeptide is Zinc finger protein rsv2 (rsv2) (Schizosaccharomyces pombe (strain 972 / ATCC 24843) (Fission yeast)).